A 188-amino-acid chain; its full sequence is Deoxyuridine 5'-triphosphate nucleotidohydrolase (188 aa).

The interval 1–34 (MGEMTSGVDGHGSTKRTTSEAQKMDFNTDRGSAI) is disordered.

The protein belongs to the dUTPase family. It depends on Mg(2+) as a cofactor.

It catalyses the reaction dUTP + H2O = dUMP + diphosphate + H(+). This enzyme is involved in nucleotide metabolism: it produces dUMP, the immediate precursor of thymidine nucleotides and it decreases the intracellular concentration of dUTP so that uracil cannot be incorporated into DNA. This is Deoxyuridine 5'-triphosphate nucleotidohydrolase (49) from Ictaluridae (bullhead catfishes).